A 192-amino-acid polypeptide reads, in one-letter code: MENRWQVMIVWQVDRMRINTWKSLVKYHMHISKKAKGWFYRHHFESRHPKISSEVHIPLETAELVITTYWGLLPGEREWHLGQGVSIEWRQGRYRTQIDPGLADQLIHIYYFDCFSESAIRKAILGHKISPRCNYQAGHNKVGSLQYLALTALIAPKKTKPPLPSVQKLVEDRWNKPQKTRGHRESHTMNGH.

The interval 14 to 17 (DRMR) is interaction with host APOBEC3F; F1-box. The interval 40–44 (YRHHF) is interaction with host APOBEC3G; G-box. An interaction with host APOBEC3F and APOBEC3G; FG-box region spans residues 54 to 72 (EVHIPLETAELVITTYWGL). An interaction with host APOBEC3F; F2-box region spans residues 74–79 (PGEREW). An RNA-binding region spans residues 75-114 (GEREWHLGQGVSIEWRQGRYRTQIDPGLADQLIHIYYFDC). Position 96 is a phosphothreonine; by host MAP4K1 (Thr96). Positions 108, 114, 133, and 139 each coordinate Zn(2+). The HCCH motif signature appears at 108 to 139 (HIYYFDCFSESAIRKAILGHKISPRCNYQAGH). Phosphoserine; by host is present on Ser144. The BC-box-like motif motif lies at 144 to 153 (SLQYLALTAL). The tract at residues 151–164 (TALIAPKKTKPPLP) is multimerization. The tract at residues 151–180 (TALIAPKKTKPPLPSVQKLVEDRWNKPQKT) is SOCS box-like. Residues 164 to 192 (PSVQKLVEDRWNKPQKTRGHRESHTMNGH) are disordered. Ser165 carries the phosphoserine; by host MAP4K1 modification. The segment at 171-172 (ED) is membrane association. The segment covering 183-192 (HRESHTMNGH) has biased composition (basic and acidic residues). Thr188 bears the Phosphothreonine; by host mark.

It belongs to the primate lentivirus group Vif protein family. Homomultimer; in vitro and presumably in vivo. Interacts with viral RNA and Pr55Gag precursor; these interactions mediate Vif incorporation into the virion. Interacts with the viral reverse transcriptase. Forms cullin-5-RING E3 ubiquitin-protein ligase complex (ECS complex) by interacting with host CUL5, RBX2, elongin BC complex (ELOB and ELOC) and CBFB/CBF-beta. Within the ECS complex, Vif interacts directly with host CUL5, ELOC and APOBEC (APOBEC3F and APOBEC3G) substrates. The ECS complex also contains some single-stranded RNA (ssRNA) that acts as a glue that bridges Vif with APOBEC (APOBEC3F and APOBEC3G) substrates. Interacts with host UBCE7IP1 isoform 3/ZIN and possibly with SAT. Interacts with host tyrosine kinases HCK and FYN; these interactions may decrease level of phosphorylated APOBEC3G incorporation into virions. Interacts with host ABCE1; this interaction may play a role in protecting viral RNA from damage during viral assembly. Interacts with host MDM2; this interaction targets Vif for degradation by the proteasome. In terms of processing, processed in virion by the viral protease. Post-translationally, highly phosphorylated on serine and threonine residues. Polyubiquitinated and degraded by the proteasome in the presence of APOBEC3G.

It localises to the host cytoplasm. The protein resides in the host cell membrane. Its subcellular location is the virion. Functionally, counteracts the innate antiviral activity of host APOBEC3F and APOBEC3G by promoting their ubiquitination and degradation. Acts as a substrate recognition component of an E3 ubiquitin-protein ligase complex: mechanistically, Vif hijacks a host cullin-5-RING E3 ubiquitin-protein ligase complex (ECS complex) and the transcription coactivator CBFB/CBF-beta to form an active E3 ubiquitin-protein ligase complex that targets APOBEC3G and APOBEC3F for polyubiquitination, leading to their degradation by the proteasome. Vif interaction with APOBEC3G also blocks its cytidine deaminase activity in a proteasome-independent manner, suggesting a dual inhibitory mechanism. May interact directly with APOBEC3G mRNA in order to inhibit its translation. Association with CBFB/CBF-beta also inhibits the transcription coactivator activity of CBFB/CBF-beta. Seems to play a role in viral morphology by affecting the stability of the viral nucleoprotein core. Finally, Vif also contributes to the G2 cell cycle arrest observed in HIV infected cells. This is Virion infectivity factor from Homo sapiens (Human).